The chain runs to 339 residues: Biotin synthase (339 aa).

One can recognise a Radical SAM core domain in the interval 55–282; the sequence is NAVQLSTLLS…KAVVRLSAGR (228 aa). [4Fe-4S] cluster-binding residues include Cys-70, Cys-74, and Cys-77. Positions 114, 145, 205, and 277 each coordinate [2Fe-2S] cluster.

This sequence belongs to the radical SAM superfamily. Biotin synthase family. In terms of assembly, homodimer. It depends on [4Fe-4S] cluster as a cofactor. [2Fe-2S] cluster is required as a cofactor.

The catalysed reaction is (4R,5S)-dethiobiotin + (sulfur carrier)-SH + 2 reduced [2Fe-2S]-[ferredoxin] + 2 S-adenosyl-L-methionine = (sulfur carrier)-H + biotin + 2 5'-deoxyadenosine + 2 L-methionine + 2 oxidized [2Fe-2S]-[ferredoxin]. The protein operates within cofactor biosynthesis; biotin biosynthesis; biotin from 7,8-diaminononanoate: step 2/2. Its function is as follows. Catalyzes the conversion of dethiobiotin (DTB) to biotin by the insertion of a sulfur atom into dethiobiotin via a radical-based mechanism. The protein is Biotin synthase of Burkholderia cenocepacia (strain ATCC BAA-245 / DSM 16553 / LMG 16656 / NCTC 13227 / J2315 / CF5610) (Burkholderia cepacia (strain J2315)).